The following is an 88-amino-acid chain: Small ribosomal subunit protein uS17 (88 aa).

This sequence belongs to the universal ribosomal protein uS17 family. Part of the 30S ribosomal subunit.

One of the primary rRNA binding proteins, it binds specifically to the 5'-end of 16S ribosomal RNA. The protein is Small ribosomal subunit protein uS17 of Levilactobacillus brevis (strain ATCC 367 / BCRC 12310 / CIP 105137 / JCM 1170 / LMG 11437 / NCIMB 947 / NCTC 947) (Lactobacillus brevis).